A 441-amino-acid polypeptide reads, in one-letter code: Xaa-Pro dipeptidase (441 aa).

The Mn(2+) site is built by D244, D255, H336, E381, and E420.

The protein belongs to the peptidase M24B family. Bacterial-type prolidase subfamily. Requires Mn(2+) as cofactor.

The enzyme catalyses Xaa-L-Pro dipeptide + H2O = an L-alpha-amino acid + L-proline. Its function is as follows. Splits dipeptides with a prolyl residue in the C-terminal position. This is Xaa-Pro dipeptidase from Xanthomonas campestris pv. campestris (strain 8004).